Here is a 193-residue protein sequence, read N- to C-terminus: Signal peptidase I (193 aa).

Residues 1 to 25 lie on the Cytoplasmic side of the membrane; that stretch reads MTEEQKPTSEKSVKRKSNTYWEWGK. A helical transmembrane segment spans residues 26-42; that stretch reads AIIIAVALALLIRHFLF. At 43 to 193 the chain is on the extracellular side; it reads EPYLVEGSSM…FPFHDMRQTK (151 aa). Residues S51 and K93 contribute to the active site.

The protein belongs to the peptidase S26 family.

Its subcellular location is the cell membrane. It carries out the reaction Cleavage of hydrophobic, N-terminal signal or leader sequences from secreted and periplasmic proteins.. The protein is Signal peptidase I (sipS2) of Bacillus amyloliquefaciens (Bacillus velezensis).